A 188-amino-acid chain; its full sequence is dTTP/UTP pyrophosphatase (188 aa).

Aspartate 70 (proton acceptor) is an active-site residue.

This sequence belongs to the Maf family. YhdE subfamily. The cofactor is a divalent metal cation.

Its subcellular location is the cytoplasm. The enzyme catalyses dTTP + H2O = dTMP + diphosphate + H(+). The catalysed reaction is UTP + H2O = UMP + diphosphate + H(+). Its function is as follows. Nucleoside triphosphate pyrophosphatase that hydrolyzes dTTP and UTP. May have a dual role in cell division arrest and in preventing the incorporation of modified nucleotides into cellular nucleic acids. The polypeptide is dTTP/UTP pyrophosphatase (Clostridium beijerinckii (strain ATCC 51743 / NCIMB 8052) (Clostridium acetobutylicum)).